Here is a 72-residue protein sequence, read N- to C-terminus: UPF0270 protein YheU (72 aa).

Belongs to the UPF0270 family.

The sequence is that of UPF0270 protein YheU from Salmonella agona (strain SL483).